Here is a 183-residue protein sequence, read N- to C-terminus: ATP synthase subunit b, chloroplastic (183 aa).

A helical transmembrane segment spans residues 27–49 (LATNPINLSVVLGVLIFFGKGVL).

This sequence belongs to the ATPase B chain family. In terms of assembly, F-type ATPases have 2 components, F(1) - the catalytic core - and F(0) - the membrane proton channel. F(1) has five subunits: alpha(3), beta(3), gamma(1), delta(1), epsilon(1). F(0) has four main subunits: a(1), b(1), b'(1) and c(10-14). The alpha and beta chains form an alternating ring which encloses part of the gamma chain. F(1) is attached to F(0) by a central stalk formed by the gamma and epsilon chains, while a peripheral stalk is formed by the delta, b and b' chains.

The protein localises to the plastid. It localises to the chloroplast thylakoid membrane. Its function is as follows. F(1)F(0) ATP synthase produces ATP from ADP in the presence of a proton or sodium gradient. F-type ATPases consist of two structural domains, F(1) containing the extramembraneous catalytic core and F(0) containing the membrane proton channel, linked together by a central stalk and a peripheral stalk. During catalysis, ATP synthesis in the catalytic domain of F(1) is coupled via a rotary mechanism of the central stalk subunits to proton translocation. Functionally, component of the F(0) channel, it forms part of the peripheral stalk, linking F(1) to F(0). This chain is ATP synthase subunit b, chloroplastic, found in Ranunculus macranthus (Large buttercup).